Here is a 116-residue protein sequence, read N- to C-terminus: Probable prefoldin subunit 2 (116 aa).

The protein belongs to the prefoldin subunit beta family. Heterohexamer of two PFD-alpha type and four PFD-beta type subunits.

Its function is as follows. Binds specifically to cytosolic chaperonin (c-CPN) and transfers target proteins to it. Binds to nascent polypeptide chain and promotes folding in an environment in which there are many competing pathways for nonnative proteins. The polypeptide is Probable prefoldin subunit 2 (pfdn2) (Dictyostelium discoideum (Social amoeba)).